Reading from the N-terminus, the 475-residue chain is ATP synthase subunit beta, chloroplastic (475 aa).

155–162 (GGAGVGKT) provides a ligand contact to ATP.

It belongs to the ATPase alpha/beta chains family. F-type ATPases have 2 components, CF(1) - the catalytic core - and CF(0) - the membrane proton channel. CF(1) has five subunits: alpha(3), beta(3), gamma(1), delta(1), epsilon(1). CF(0) has four main subunits: a(1), b(1), b'(1) and c(9-12).

It is found in the plastid. It localises to the chloroplast thylakoid membrane. The enzyme catalyses ATP + H2O + 4 H(+)(in) = ADP + phosphate + 5 H(+)(out). Functionally, produces ATP from ADP in the presence of a proton gradient across the membrane. The catalytic sites are hosted primarily by the beta subunits. This is ATP synthase subunit beta, chloroplastic from Guillardia theta (Cryptophyte).